Reading from the N-terminus, the 231-residue chain is MSALCPLLTPPASEALLLAQARQLSGYTLGELAVMAGITTPKDLKRDKGWIGVLLEIWLGASAGSKPEQDFAALGVELKTIPVDSLGRPLETTFVCVAPLTGNSGVTWETSHVRHKLKRVLWVPVEGDRSIPLAERRVGSPLLWSPSEEEDRQLRLDWEELMDMIVLGQVERITARHGEVLQLRPKAANARALTEAIGARGEPILTLPRGFYLKKNFTQALLARHFLLQNP.

Belongs to the MutH family.

The protein localises to the cytoplasm. In terms of biological role, sequence-specific endonuclease that cleaves unmethylated GATC sequences. It is involved in DNA mismatch repair. The polypeptide is DNA mismatch repair protein MutH (Salmonella typhi).